The following is a 118-amino-acid chain: Myotrophin (118 aa).

3 ANK repeats span residues 1–30 (MSDK…DVNR), 34–65 (GGRK…NAPD), and 67–98 (HNIT…TVKG).

The protein belongs to the myotrophin family.

It is found in the cytoplasm. The protein localises to the nucleus. It localises to the perinuclear region. Its function is as follows. Regulates NF-kappa-B transcription factor activity. Promotes growth of cardiomyocytes, but not cardiomyocyte proliferation. Promotes cardiac muscle hypertrophy. Plays a role in the regulation of the growth of actin filaments. Inhibits the activity of the F-actin-capping protein complex. This is Myotrophin (MTPN) from Gallus gallus (Chicken).